The primary structure comprises 232 residues: Lipoprotein-releasing system ATP-binding protein LolD (232 aa).

The ABC transporter domain maps to 11 to 232 (IEVTDLQRAF…LHDGRLIEEY (222 aa)). An ATP-binding site is contributed by 47-54 (GPSGAGKS).

This sequence belongs to the ABC transporter superfamily. Lipoprotein translocase (TC 3.A.1.125) family. The complex is composed of two ATP-binding proteins (LolD) and two transmembrane proteins (LolC and LolE).

It localises to the cell inner membrane. Functionally, part of the ABC transporter complex LolCDE involved in the translocation of mature outer membrane-directed lipoproteins, from the inner membrane to the periplasmic chaperone, LolA. Responsible for the formation of the LolA-lipoprotein complex in an ATP-dependent manner. This chain is Lipoprotein-releasing system ATP-binding protein LolD, found in Zymomonas mobilis subsp. mobilis (strain ATCC 31821 / ZM4 / CP4).